A 580-amino-acid polypeptide reads, in one-letter code: Mitogen-activated protein kinase 12 (580 aa).

Residues 18–38 (RTASGSNQSSNAGEEAASSDL) form a disordered region. Residues 20-29 (ASGSNQSSNA) are compositionally biased toward polar residues. One can recognise a Protein kinase domain in the interval 87–378 (YQIQEVIGKG…AEEALADPYF (292 aa)). ATP is bound by residues 93-101 (IGKGSYGVV) and Lys116. Catalysis depends on Asp213, which acts as the Proton acceptor. Thr249 is modified (phosphothreonine). Residues 249-251 (TDY) carry the TXY motif. Tyr251 carries the phosphotyrosine modification. The tract at residues 325 to 506 (ARRYLSTMRK…SADSVARTTV (182 aa)) is required for kinase activity and nuclear localization. The disordered stretch occupies residues 458–580 (YSKGERGSPL…LSEQVSRMHS (123 aa)). Polar residues predominate over residues 502–543 (ARTTVSPPMSQDAQQHGSAGQNGVTSTDLSSRSYLKSASISA). Over residues 554–566 (EPEDDYISEEMEG) the composition is skewed to acidic residues.

The protein belongs to the protein kinase superfamily. CMGC Ser/Thr protein kinase family. MAP kinase subfamily. In terms of assembly, interacts with EREBP1. Post-translationally, dually phosphorylated on Thr-249 and Tyr-251, which activates the enzyme. Phosphorylated on tyrosine residue.

It localises to the cytoplasm. It is found in the nucleus. It carries out the reaction L-seryl-[protein] + ATP = O-phospho-L-seryl-[protein] + ADP + H(+). The catalysed reaction is L-threonyl-[protein] + ATP = O-phospho-L-threonyl-[protein] + ADP + H(+). Its activity is regulated as follows. Activated by threonine and tyrosine phosphorylation. Activated in response to hydrogen peroxide, salicylic acid, jasmonic acid, ethylene, fungal elicitor and infection with rice blast fungus (M.grisea). Its function is as follows. May be involved in defense signaling pathway. Phosphorylates EREBP1 transcriptional activator in vitro. Enhances DNA-binding activity of EREBP1 to the GCC box element of pathogenesis-related (PR) gene promoters. The sequence is that of Mitogen-activated protein kinase 12 (MPK12) from Oryza sativa subsp. japonica (Rice).